The primary structure comprises 79 residues: uncharacterized protein (79 aa).

The N-terminal stretch at 1–19 (MKYVALAFVLSLVILQISA) is a signal peptide. A disordered region spans residues 52–71 (RGRKSRTQSGRNQGKSTSDS). The segment covering 58–71 (TQSGRNQGKSTSDS) has biased composition (polar residues).

As to expression, nacreous layer of shell (at protein level). Expressed primarily in the mantle with highest level in the mantle pallium and lower level in the mantle edge.

It is found in the secreted. This is an uncharacterized protein from Margaritifera margaritifera (Freshwater pearl mussel).